Consider the following 583-residue polypeptide: Proteasome-associated ATPase (583 aa).

Residues M1–N19 show a composition bias toward polar residues. Residues M1–S22 form a disordered region. Residues A24–Q75 are a coiled coil. ATP is bound at residue G271 to L276. Residues Y582–L583 form a docks into pockets in the proteasome alpha-ring region.

The protein belongs to the AAA ATPase family. Homohexamer. Assembles into a hexameric ring structure that caps the 20S proteasome core. Strongly interacts with the prokaryotic ubiquitin-like protein Pup through a hydrophobic interface; the interacting region of ARC lies in its N-terminal coiled-coil domain. There is one Pup binding site per ARC hexamer ring. Upon ATP-binding, the C-terminus of ARC interacts with the alpha-rings of the proteasome core, possibly by binding to the intersubunit pockets.

It functions in the pathway protein degradation; proteasomal Pup-dependent pathway. In terms of biological role, ATPase which is responsible for recognizing, binding, unfolding and translocation of pupylated proteins into the bacterial 20S proteasome core particle. May be essential for opening the gate of the 20S proteasome via an interaction with its C-terminus, thereby allowing substrate entry and access to the site of proteolysis. Thus, the C-termini of the proteasomal ATPase may function like a 'key in a lock' to induce gate opening and therefore regulate proteolysis. The sequence is that of Proteasome-associated ATPase from Pseudarthrobacter chlorophenolicus (strain ATCC 700700 / DSM 12829 / CIP 107037 / JCM 12360 / KCTC 9906 / NCIMB 13794 / A6) (Arthrobacter chlorophenolicus).